An 87-amino-acid chain; its full sequence is Exodeoxyribonuclease 7 small subunit (87 aa).

The protein belongs to the XseB family. As to quaternary structure, heterooligomer composed of large and small subunits.

It localises to the cytoplasm. It catalyses the reaction Exonucleolytic cleavage in either 5'- to 3'- or 3'- to 5'-direction to yield nucleoside 5'-phosphates.. Functionally, bidirectionally degrades single-stranded DNA into large acid-insoluble oligonucleotides, which are then degraded further into small acid-soluble oligonucleotides. In Xanthomonas campestris pv. campestris (strain 8004), this protein is Exodeoxyribonuclease 7 small subunit.